The primary structure comprises 146 residues: uncharacterized protein (146 aa).

This is an uncharacterized protein from Methanothermobacter thermautotrophicus (Methanobacterium thermoformicicum).